The sequence spans 343 residues: Tetraacyldisaccharide 4'-kinase (343 aa).

55–62 (TVGGEGKT) lines the ATP pocket.

This sequence belongs to the LpxK family.

It carries out the reaction a lipid A disaccharide + ATP = a lipid IVA + ADP + H(+). Its pathway is glycolipid biosynthesis; lipid IV(A) biosynthesis; lipid IV(A) from (3R)-3-hydroxytetradecanoyl-[acyl-carrier-protein] and UDP-N-acetyl-alpha-D-glucosamine: step 6/6. In terms of biological role, transfers the gamma-phosphate of ATP to the 4'-position of a tetraacyldisaccharide 1-phosphate intermediate (termed DS-1-P) to form tetraacyldisaccharide 1,4'-bis-phosphate (lipid IVA). In Chelativorans sp. (strain BNC1), this protein is Tetraacyldisaccharide 4'-kinase.